Consider the following 332-residue polypeptide: L-lactate dehydrogenase A chain (332 aa).

An N-acetylalanine modification is found at A2. K5 is modified (N6-acetyllysine; alternate). K5 is modified (N6-succinyllysine; alternate). At K14 the chain carries N6-acetyllysine. Residue T18 is modified to Phosphothreonine. 29–57 (GAVGMACAISILMKDLADELALVDVIEDK) lines the NAD(+) pocket. At K57 the chain carries N6-acetyllysine; alternate. A Glycyl lysine isopeptide (Lys-Gly) (interchain with G-Cter in SUMO2); alternate cross-link involves residue K57. An N6-acetyllysine modification is found at K81. R99 serves as a coordination point for NAD(+). R106 serves as a coordination point for substrate. K118 bears the N6-acetyllysine; alternate mark. Position 118 is an N6-succinyllysine; alternate (K118). K126 bears the N6-acetyllysine mark. N138 and R169 together coordinate substrate. The Proton acceptor role is filled by H193. 2 positions are modified to N6-acetyllysine: K224 and K232. Residue Y239 is modified to Phosphotyrosine. An N6-acetyllysine modification is found at K243. T248 provides a ligand contact to substrate. Phosphothreonine is present on T309. S310 bears the Phosphoserine mark. K318 bears the N6-acetyllysine; alternate mark. K318 is modified (N6-succinyllysine; alternate). At T322 the chain carries Phosphothreonine.

This sequence belongs to the LDH/MDH superfamily. LDH family. As to quaternary structure, homotetramer. Interacts with PTEN upstream reading frame protein MP31. ISGylated.

The protein resides in the cytoplasm. It carries out the reaction (S)-lactate + NAD(+) = pyruvate + NADH + H(+). It participates in fermentation; pyruvate fermentation to lactate; (S)-lactate from pyruvate: step 1/1. In terms of biological role, interconverts simultaneously and stereospecifically pyruvate and lactate with concomitant interconversion of NADH and NAD(+). In Pongo abelii (Sumatran orangutan), this protein is L-lactate dehydrogenase A chain (LDHA).